Here is a 186-residue protein sequence, read N- to C-terminus: UPF0301 protein Neut_0448 (186 aa).

Belongs to the UPF0301 (AlgH) family.

The chain is UPF0301 protein Neut_0448 from Nitrosomonas eutropha (strain DSM 101675 / C91 / Nm57).